Consider the following 471-residue polypeptide: ATP synthase subunit beta (471 aa).

An ATP-binding site is contributed by 154 to 161 (GGAGVGKT).

Belongs to the ATPase alpha/beta chains family. In terms of assembly, F-type ATPases have 2 components, CF(1) - the catalytic core - and CF(0) - the membrane proton channel. CF(1) has five subunits: alpha(3), beta(3), gamma(1), delta(1), epsilon(1). CF(0) has three main subunits: a(1), b(2) and c(9-12). The alpha and beta chains form an alternating ring which encloses part of the gamma chain. CF(1) is attached to CF(0) by a central stalk formed by the gamma and epsilon chains, while a peripheral stalk is formed by the delta and b chains.

Its subcellular location is the cell membrane. The enzyme catalyses ATP + H2O + 4 H(+)(in) = ADP + phosphate + 5 H(+)(out). Its function is as follows. Produces ATP from ADP in the presence of a proton gradient across the membrane. The catalytic sites are hosted primarily by the beta subunits. The polypeptide is ATP synthase subunit beta (Mesomycoplasma hyopneumoniae (strain J / ATCC 25934 / NCTC 10110) (Mycoplasma hyopneumoniae)).